A 570-amino-acid chain; its full sequence is 2-isopropylmalate synthase (570 aa).

The region spanning 31–305 (PIWMSTDLRD…DPELDFSHIN (275 aa)) is the Pyruvate carboxyltransferase domain. Positions 40, 244, 246, and 280 each coordinate Mg(2+). Residues 437–570 (SDGAIGYVSH…RRSSAQATVA (134 aa)) are regulatory domain.

It belongs to the alpha-IPM synthase/homocitrate synthase family. LeuA type 2 subfamily. In terms of assembly, homodimer. It depends on Mg(2+) as a cofactor.

It is found in the cytoplasm. It catalyses the reaction 3-methyl-2-oxobutanoate + acetyl-CoA + H2O = (2S)-2-isopropylmalate + CoA + H(+). It participates in amino-acid biosynthesis; L-leucine biosynthesis; L-leucine from 3-methyl-2-oxobutanoate: step 1/4. Functionally, catalyzes the condensation of the acetyl group of acetyl-CoA with 3-methyl-2-oxobutanoate (2-ketoisovalerate) to form 3-carboxy-3-hydroxy-4-methylpentanoate (2-isopropylmalate). The polypeptide is 2-isopropylmalate synthase (Ralstonia pickettii (strain 12J)).